A 266-amino-acid polypeptide reads, in one-letter code: Integral membrane protein 2B (266 aa).

Residues 1 to 54 (MVKVTFNSALAQKEAKKDESKSGEEALIIPPDAVAVDCKDPDEVVPVGQRRAWC) are Cytoplasmic-facing. A helical; Signal-anchor for type II membrane protein membrane pass occupies residues 55-75 (WCMCFGLAFMLAGVILGGAYL). The Lumenal segment spans residues 76–266 (YKYFAFQPDD…RFAVETLICP (191 aa)). The necessary for interaction with APP and inhibitor effects on APP processing stretch occupies residues 102 to 134 (EPSADAPASRYQTIEENIKIFEEDEVEFISVPV). Positions 137-231 (FADSDPANIV…LCHDKETYKL (95 aa)) constitute a BRICHOS domain. Intrachain disulfides connect Cys164-Cys223 and Cys248-Cys265. Asn170 carries an N-linked (GlcNAc...) asparagine glycan.

It belongs to the ITM2 family. As to quaternary structure, homodimer; disulfide-linked. Interacts with SPPL2A and SPPL2B. Interacts with APP. Mature BRI2 (mBRI2) interacts with the APP amyloid-beta A4 protein; the interaction occurs at the cell surface and in the endocytic compartments and enable alpha- and beta-secretase-induced APP cleavage inhibition. Mature BRI2 (mBRI2) interacts with the APP C99; the interaction occurs in the endocytic compartments and enable gamma-secretase-induced C99 cleavage inhibition. May form heterodimers with Bri23 peptide and APP amyloid-beta protein 40. Interacts with ADAM7 in sperm; the interaction increases following capacitation. Post-translationally, the ectodomain C-terminal part of the imBRI2 is processed by furin producing a secreted Bri23 peptide and a mature BRI2, membrane form (mBRI2). The remaining part of the ectodomain of mBRI2 containing the BRICHOS domain is cleaved by ADAM10 and is secreted (BRI2C, soluble form). The membrane-bound N-terminal fragment (BRI2C, membrane form) is further proteolytically processed by SPPL2A and SPPL2B through regulated intramembrane proteolysis producing a secreted C-peptide and a BRI2 intracellular domain (BRI2 ICD) released in the cytosol. Shedding by ADAM10 facilitates intramembrane cleavage but is not absolutely required for BRI2 ICD generation. In terms of processing, glycosylation at Asn-170 is important for cell surface localization, but doesn't affect furin- and ADAM10-induced proteolytic processing.

It is found in the golgi apparatus membrane. The protein localises to the cell membrane. It localises to the endosome membrane. Its subcellular location is the secreted. Functionally, plays a regulatory role in the processing of the amyloid-beta A4 precursor protein (APP) and acts as an inhibitor of the amyloid-beta peptide aggregation and fibrils deposition. Plays a role in the induction of neurite outgrowth. Functions as a protease inhibitor by blocking access of secretases to APP cleavage sites. Mature BRI2 (mBRI2) functions as a modulator of the amyloid-beta A4 precursor protein (APP) processing leading to a strong reduction in the secretion of secretase-processed amyloid-beta protein 40 and amyloid-beta protein 42. Its function is as follows. Bri23 peptide prevents aggregation of APP amyloid-beta protein 42 into toxic oligomers. This chain is Integral membrane protein 2B (ITM2B), found in Bos taurus (Bovine).